The following is a 382-amino-acid chain: Biotin synthase (382 aa).

The Radical SAM core domain occupies 83–318 (CCGNVVDLCS…EQILRYAGGR (236 aa)). [4Fe-4S] cluster is bound by residues Cys-101, Cys-105, and Cys-108. Positions 146, 183, 243, and 313 each coordinate [2Fe-2S] cluster.

The protein belongs to the radical SAM superfamily. Biotin synthase family. In terms of assembly, homodimer. The cofactor is [4Fe-4S] cluster. It depends on [2Fe-2S] cluster as a cofactor.

The catalysed reaction is (4R,5S)-dethiobiotin + (sulfur carrier)-SH + 2 reduced [2Fe-2S]-[ferredoxin] + 2 S-adenosyl-L-methionine = (sulfur carrier)-H + biotin + 2 5'-deoxyadenosine + 2 L-methionine + 2 oxidized [2Fe-2S]-[ferredoxin]. It functions in the pathway cofactor biosynthesis; biotin biosynthesis; biotin from 7,8-diaminononanoate: step 2/2. Functionally, catalyzes the conversion of dethiobiotin (DTB) to biotin by the insertion of a sulfur atom into dethiobiotin via a radical-based mechanism. The sequence is that of Biotin synthase from Crocosphaera subtropica (strain ATCC 51142 / BH68) (Cyanothece sp. (strain ATCC 51142)).